The following is a 690-amino-acid chain: Elongation factor G (690 aa).

One can recognise a tr-type G domain in the interval 8-282; sequence DKVRNIGIMA…AIVNYLPSPL (275 aa). GTP is bound by residues 17–24, 81–85, and 135–138; these read AHIDAGKT, DTPGH, and NKMD.

The protein belongs to the TRAFAC class translation factor GTPase superfamily. Classic translation factor GTPase family. EF-G/EF-2 subfamily.

Its subcellular location is the cytoplasm. In terms of biological role, catalyzes the GTP-dependent ribosomal translocation step during translation elongation. During this step, the ribosome changes from the pre-translocational (PRE) to the post-translocational (POST) state as the newly formed A-site-bound peptidyl-tRNA and P-site-bound deacylated tRNA move to the P and E sites, respectively. Catalyzes the coordinated movement of the two tRNA molecules, the mRNA and conformational changes in the ribosome. This is Elongation factor G from Caldanaerobacter subterraneus subsp. tengcongensis (strain DSM 15242 / JCM 11007 / NBRC 100824 / MB4) (Thermoanaerobacter tengcongensis).